We begin with the raw amino-acid sequence, 663 residues long: Ras and EF-hand domain-containing protein (663 aa).

2 EF-hand domains span residues 1–33 and 35–70; these read MNHA…CREL and VPAD…VSEA. Ca(2+) contacts are provided by Asp-14, Asn-16, Ser-18, Arg-20, Asp-25, Asp-48, Asp-50, Asp-52, Tyr-54, and Asp-59. Residues 122 to 297 are a coiled coil; that stretch reads ELLLQQFEDL…LKKMVMEFQS (176 aa). Polar residues predominate over residues 324–336; that stretch reads SQENASTKRQLSP. The disordered stretch occupies residues 324–343; it reads SQENASTKRQLSPRNEVLPR. Residues 477-482, 580-583, and 615-616 contribute to the GTP site; these read GSGKSS, NKVD, and AK.

Belongs to the small GTPase superfamily. Rab family. As to quaternary structure, homodimer.

It is found in the cytoplasm. It localises to the perinuclear region. Functionally, binds predominantly GDP, and also GTP. This Danio rerio (Zebrafish) protein is Ras and EF-hand domain-containing protein (rasef).